A 358-amino-acid chain; its full sequence is WD repeat-containing protein 53 (358 aa).

WD repeat units lie at residues 1–38 (MAVK…AWGE), 43–80 (LGHT…VLDV), 85–123 (DSLD…ILDL), 127–166 (KVIR…LWSL), 173–225 (WITN…RIFR), and 232–270 (EQEL…LWDA). Residues 273–311 (EVEKKQKSPTKRTHRKKPKRGTCTKQGGNTNASVTDEEE) form a disordered region. A compositionally biased stretch (basic residues) spans 279–294 (KSPTKRTHRKKPKRGT). The span at 295-306 (CTKQGGNTNASV) shows a compositional bias: polar residues. The WD 7 repeat unit spans residues 314-355 (NILPKLNIEHGEKVNWLLGTKIKGHQNILVADQTSCISVYPL).

This sequence belongs to the WD repeat WDR53 family.

The polypeptide is WD repeat-containing protein 53 (WDR53) (Homo sapiens (Human)).